A 529-amino-acid chain; its full sequence is UDP-glucuronosyltransferase 2B33 (529 aa).

The N-terminal stretch at 1 to 24 (MSVKWTSIILLIQLSFYFSSGSCG) is a signal peptide. N-linked (GlcNAc...) asparagine glycans are attached at residues N67 and N68. A helical membrane pass occupies residues 494–514 (IGFLLACVATVIFIIMKCCLF).

The protein belongs to the UDP-glycosyltransferase family.

It is found in the microsome membrane. Its subcellular location is the endoplasmic reticulum membrane. The enzyme catalyses glucuronate acceptor + UDP-alpha-D-glucuronate = acceptor beta-D-glucuronoside + UDP + H(+). Functionally, UDPGTs are of major importance in the conjugation and subsequent elimination of potentially toxic xenobiotics and endogenous compounds. This isozyme has glucuronidating capacity on estriol and does not catalyze the glucuronidation of beta-estradiol. Capable of conjugating 4-hydroxyestrone, androsterone, diclofenac, and hyodeoxycholic acid. The sequence is that of UDP-glucuronosyltransferase 2B33 (UGT2B33) from Macaca mulatta (Rhesus macaque).